Consider the following 308-residue polypeptide: Vomeronasal type-1 receptor 92 (308 aa).

Topologically, residues 1–18 (MNKDNTLHTIMKITMFSE) are extracellular. The chain crosses the membrane as a helical span at residues 19-39 (VSVGISANSILFFAHLCMLLG). Topologically, residues 40 to 48 (ENRPKPFHL) are cytoplasmic. Residues 49–69 (YIVSLSLTQLILLITMGLIAV) form a helical membrane-spanning segment. The Extracellular segment spans residues 70–91 (DMFMSWGRWDSTPCQSLIYLHR). Cysteine 83 and cysteine 170 are disulfide-bonded. The chain crosses the membrane as a helical span at residues 92–112 (LLRGFTLCAACLLNVFWMITL). At 113 to 132 (SPRSSCLSKFKHNSPHHISG) the chain is on the cytoplasmic side. The chain crosses the membrane as a helical span at residues 133 to 153 (AFLFLCVLYMSFSSHLLVSII). Topologically, residues 154–188 (ATPNLTSNIFMYVTQSCSLLPMSYSRTSTFSTTIA) are extracellular. Asparagine 157 carries N-linked (GlcNAc...) asparagine glycosylation. A helical transmembrane segment spans residues 189 to 209 (IREAFLISLMALSSGFMVTLL). Over 210–236 (WRHKKQAQHLHSTSLSSKASPERRATR) the chain is Cytoplasmic. Residues 237 to 257 (TILLLMSFFVVLYILENVVFY) traverse the membrane as a helical segment. Residues 258–267 (SRMKFKDGSM) lie on the Extracellular side of the membrane. Residues 268 to 288 (FYCVQIIVSHSYATISPFVFI) traverse the membrane as a helical segment. At 289 to 308 (CTEKHMTKILRSVCTRIINI) the chain is on the cytoplasmic side.

It belongs to the G-protein coupled receptor 1 family.

It is found in the cell membrane. Functionally, putative pheromone receptor implicated in the regulation of social as well as reproductive behavior. In Rattus norvegicus (Rat), this protein is Vomeronasal type-1 receptor 92 (Vom1r92).